The following is a 125-amino-acid chain: S-adenosylmethionine decarboxylase proenzyme (125 aa).

Ser-71 (schiff-base intermediate with substrate; via pyruvic acid) is an active-site residue. Ser-71 is modified (pyruvic acid (Ser); by autocatalysis). His-76 acts as the Proton acceptor; for processing activity in catalysis. Cys-91 (proton donor; for catalytic activity) is an active-site residue.

This sequence belongs to the prokaryotic AdoMetDC family. Type 1 subfamily. In terms of assembly, heterotetramer of two alpha and two beta chains arranged as a dimer of alpha/beta heterodimers. Pyruvate serves as cofactor. Is synthesized initially as an inactive proenzyme. Formation of the active enzyme involves a self-maturation process in which the active site pyruvoyl group is generated from an internal serine residue via an autocatalytic post-translational modification. Two non-identical subunits are generated from the proenzyme in this reaction, and the pyruvate is formed at the N-terminus of the alpha chain, which is derived from the carboxyl end of the proenzyme. The post-translation cleavage follows an unusual pathway, termed non-hydrolytic serinolysis, in which the side chain hydroxyl group of the serine supplies its oxygen atom to form the C-terminus of the beta chain, while the remainder of the serine residue undergoes an oxidative deamination to produce ammonia and the pyruvoyl group blocking the N-terminus of the alpha chain.

The catalysed reaction is S-adenosyl-L-methionine + H(+) = S-adenosyl 3-(methylsulfanyl)propylamine + CO2. The protein operates within amine and polyamine biosynthesis; S-adenosylmethioninamine biosynthesis; S-adenosylmethioninamine from S-adenosyl-L-methionine: step 1/1. Its function is as follows. Catalyzes the decarboxylation of S-adenosylmethionine to S-adenosylmethioninamine (dcAdoMet), the propylamine donor required for the synthesis of the polyamines spermine and spermidine from the diamine putrescine. This is S-adenosylmethionine decarboxylase proenzyme from Pyrobaculum aerophilum (strain ATCC 51768 / DSM 7523 / JCM 9630 / CIP 104966 / NBRC 100827 / IM2).